A 141-amino-acid chain; its full sequence is Pyrophosphate-energized proton pump (141 aa).

3 helical membrane passes run 11 to 31 (GLIA…TLTV), 46 to 66 (GTNL…IVVI), and 121 to 141 (LAGL…AGMI).

Belongs to the H(+)-translocating pyrophosphatase (TC 3.A.10) family. Homodimer. Requires Mg(2+) as cofactor.

Its subcellular location is the cell inner membrane. It carries out the reaction diphosphate + H2O + H(+)(in) = 2 phosphate + 2 H(+)(out). Functionally, proton pump that utilizes the energy of pyrophosphate hydrolysis as the driving force for proton movement across the membrane. Generates a proton motive force. The chain is Pyrophosphate-energized proton pump (hppA) from Anaplasma marginale.